Reading from the N-terminus, the 104-residue chain is L-rhamnose mutarotase (104 aa).

Tyr-18 contacts substrate. Residue His-22 is the Proton donor of the active site. Substrate is bound by residues Tyr-41 and 76-77; that span reads WW.

It belongs to the rhamnose mutarotase family. Homodimer.

It localises to the cytoplasm. It catalyses the reaction alpha-L-rhamnose = beta-L-rhamnose. The protein operates within carbohydrate metabolism; L-rhamnose metabolism. Functionally, involved in the anomeric conversion of L-rhamnose. The sequence is that of L-rhamnose mutarotase from Salmonella arizonae (strain ATCC BAA-731 / CDC346-86 / RSK2980).